A 206-amino-acid chain; its full sequence is Large ribosomal subunit protein uL3 (206 aa).

The tract at residues 127 to 151 is disordered; sequence SGGPSSHGSKFHRHLGGTGQATTPA.

The protein belongs to the universal ribosomal protein uL3 family. As to quaternary structure, part of the 50S ribosomal subunit. Forms a cluster with proteins L14 and L19.

Functionally, one of the primary rRNA binding proteins, it binds directly near the 3'-end of the 23S rRNA, where it nucleates assembly of the 50S subunit. This Borreliella afzelii (strain PKo) (Borrelia afzelii) protein is Large ribosomal subunit protein uL3.